The sequence spans 150 residues: Ribosome-binding factor A (150 aa).

The tract at residues 131-150 (LSHDDDEDGGADEAPRNGDE) is disordered.

The protein belongs to the RbfA family. In terms of assembly, monomer. Binds 30S ribosomal subunits, but not 50S ribosomal subunits or 70S ribosomes.

It localises to the cytoplasm. Its function is as follows. One of several proteins that assist in the late maturation steps of the functional core of the 30S ribosomal subunit. Associates with free 30S ribosomal subunits (but not with 30S subunits that are part of 70S ribosomes or polysomes). Required for efficient processing of 16S rRNA. May interact with the 5'-terminal helix region of 16S rRNA. This chain is Ribosome-binding factor A, found in Brucella melitensis biotype 2 (strain ATCC 23457).